Reading from the N-terminus, the 63-residue chain is Large ribosomal subunit protein uL29 (63 aa).

It belongs to the universal ribosomal protein uL29 family.

This chain is Large ribosomal subunit protein uL29, found in Azotobacter vinelandii (strain DJ / ATCC BAA-1303).